A 208-amino-acid polypeptide reads, in one-letter code: Small ribosomal subunit protein uS4 (208 aa).

One can recognise an S4 RNA-binding domain in the interval 95 to 157 (RRIDNVVYRA…DSLKKLIRSN (63 aa)).

The protein belongs to the universal ribosomal protein uS4 family. In terms of assembly, part of the 30S ribosomal subunit. Contacts protein S5. The interaction surface between S4 and S5 is involved in control of translational fidelity.

Functionally, one of the primary rRNA binding proteins, it binds directly to 16S rRNA where it nucleates assembly of the body of the 30S subunit. With S5 and S12 plays an important role in translational accuracy. The chain is Small ribosomal subunit protein uS4 from Borreliella burgdorferi (strain ATCC 35210 / DSM 4680 / CIP 102532 / B31) (Borrelia burgdorferi).